Here is a 302-residue protein sequence, read N- to C-terminus: Probable 2-(5''-triphosphoribosyl)-3'-dephosphocoenzyme-A synthase 1 (302 aa).

Belongs to the CitG/MdcB family.

The enzyme catalyses 3'-dephospho-CoA + ATP = 2'-(5''-triphospho-alpha-D-ribosyl)-3'-dephospho-CoA + adenine. This chain is Probable 2-(5''-triphosphoribosyl)-3'-dephosphocoenzyme-A synthase 1, found in Salmonella typhimurium (strain LT2 / SGSC1412 / ATCC 700720).